A 201-amino-acid chain; its full sequence is Orotidine 5'-phosphate decarboxylase (201 aa).

Residues Asp-8, Lys-26, 52–61 (DLKFCDIPST), Thr-106, Arg-153, Gln-161, Gly-180, and Arg-181 each bind substrate. The active-site Proton donor is the Lys-54.

It belongs to the OMP decarboxylase family. Type 1 subfamily. As to quaternary structure, homodimer.

The enzyme catalyses orotidine 5'-phosphate + H(+) = UMP + CO2. The protein operates within pyrimidine metabolism; UMP biosynthesis via de novo pathway; UMP from orotate: step 2/2. Its function is as follows. Catalyzes the decarboxylation of orotidine 5'-monophosphate (OMP) to uridine 5'-monophosphate (UMP). This chain is Orotidine 5'-phosphate decarboxylase (pyrF), found in Thermotoga maritima (strain ATCC 43589 / DSM 3109 / JCM 10099 / NBRC 100826 / MSB8).